Reading from the N-terminus, the 239-residue chain is Purine nucleoside phosphorylase DeoD-type (239 aa).

His5 lines the a purine D-ribonucleoside pocket. Phosphate-binding positions include Gly21, Arg25, Arg44, and 88–91 (RVGS). Residues 180-182 (EME) and 204-205 (SD) contribute to the a purine D-ribonucleoside site. Catalysis depends on Asp205, which acts as the Proton donor.

This sequence belongs to the PNP/UDP phosphorylase family. Homohexamer; trimer of homodimers.

It carries out the reaction a purine D-ribonucleoside + phosphate = a purine nucleobase + alpha-D-ribose 1-phosphate. It catalyses the reaction a purine 2'-deoxy-D-ribonucleoside + phosphate = a purine nucleobase + 2-deoxy-alpha-D-ribose 1-phosphate. Functionally, catalyzes the reversible phosphorolytic breakdown of the N-glycosidic bond in the beta-(deoxy)ribonucleoside molecules, with the formation of the corresponding free purine bases and pentose-1-phosphate. This is Purine nucleoside phosphorylase DeoD-type from Yersinia pestis bv. Antiqua (strain Antiqua).